Here is a 155-residue protein sequence, read N- to C-terminus: MPKGSGKVIAQNKKAFHDYFIEETYEAGLVLQGTEIKSIRAGRVNLKDAFARVHNGEVWVHNMHISTYEQGNRFNHDPLRTRKLLLHKKEIDKLAGAAKETGYALVPLKIYLKNGFAKMALGLAKGKKQYDKRHDLKEKEAKREIARAFRDRQKM.

This sequence belongs to the SmpB family.

It is found in the cytoplasm. In terms of biological role, required for rescue of stalled ribosomes mediated by trans-translation. Binds to transfer-messenger RNA (tmRNA), required for stable association of tmRNA with ribosomes. tmRNA and SmpB together mimic tRNA shape, replacing the anticodon stem-loop with SmpB. tmRNA is encoded by the ssrA gene; the 2 termini fold to resemble tRNA(Ala) and it encodes a 'tag peptide', a short internal open reading frame. During trans-translation Ala-aminoacylated tmRNA acts like a tRNA, entering the A-site of stalled ribosomes, displacing the stalled mRNA. The ribosome then switches to translate the ORF on the tmRNA; the nascent peptide is terminated with the 'tag peptide' encoded by the tmRNA and targeted for degradation. The ribosome is freed to recommence translation, which seems to be the essential function of trans-translation. This is SsrA-binding protein from Bacillus cereus (strain ATCC 10987 / NRS 248).